We begin with the raw amino-acid sequence, 205 residues long: MGGTFDPIHHGHLVAASEVAAKFGLDEVVFVPTGQPWQKMSKKVSEPEHRYLMTVIATASNPRFTVSRVDVDRPGPTYTIDTLRDLRTQRPDADLFFITGADAMAQILSWKNIDELWSLAHFVGVTRPGHVLDGMGRKDVSLLEVPAMAISSTDCRTRVAAGNPVWYLVPDGVVQYIAKYGLYAGHADPGPSAALTELHEPASTE.

The protein belongs to the NadD family.

It carries out the reaction nicotinate beta-D-ribonucleotide + ATP + H(+) = deamido-NAD(+) + diphosphate. Its pathway is cofactor biosynthesis; NAD(+) biosynthesis; deamido-NAD(+) from nicotinate D-ribonucleotide: step 1/1. Functionally, catalyzes the reversible adenylation of nicotinate mononucleotide (NaMN) to nicotinic acid adenine dinucleotide (NaAD). The sequence is that of Probable nicotinate-nucleotide adenylyltransferase from Arthrobacter sp. (strain FB24).